Consider the following 749-residue polypeptide: 1,4-alpha-glucan branching enzyme GlgB (749 aa).

The active-site Nucleophile is the D427. E480 serves as the catalytic Proton donor.

This sequence belongs to the glycosyl hydrolase 13 family. GlgB subfamily. In terms of assembly, monomer.

It carries out the reaction Transfers a segment of a (1-&gt;4)-alpha-D-glucan chain to a primary hydroxy group in a similar glucan chain.. Its pathway is glycan biosynthesis; glycogen biosynthesis. In terms of biological role, catalyzes the formation of the alpha-1,6-glucosidic linkages in glycogen by scission of a 1,4-alpha-linked oligosaccharide from growing alpha-1,4-glucan chains and the subsequent attachment of the oligosaccharide to the alpha-1,6 position. This Thermobifida fusca (strain YX) protein is 1,4-alpha-glucan branching enzyme GlgB.